Reading from the N-terminus, the 99-residue chain is Integration host factor subunit alpha (99 aa).

It belongs to the bacterial histone-like protein family. As to quaternary structure, heterodimer of an alpha and a beta chain.

This protein is one of the two subunits of integration host factor, a specific DNA-binding protein that functions in genetic recombination as well as in transcriptional and translational control. The chain is Integration host factor subunit alpha from Enterobacter sp. (strain 638).